The chain runs to 525 residues: MATPTQEAIDTFMTITGSSNAVAVRKLEEYRGNLNRAVNAYFTHGDQNSYDAMDIDDGVTPVLSEARTTDPFPLRDPNFGRSLFDNDPVMSRPPFVSHPREAREIPIEVKDSNGPSGQSNDAPTIEDVTETAQAHGPAAQEAVIIDEVSDDDNQSAPTGQSRHAVPVGSAENNMQHYNDIEEQIIRAAIEASKMETGDDVTKSVTVQSAEREVLRSEGWKASSSEREASEMVSIPVQQGSRASNGRFAAPSSLSEDDDDDDDDDPDYVEEEEEPLVSHRPRRAVSGSRSSLNDDLPRSPEAEDATIHSPGAGNGFPSEWGGISSEEHDEAIMLEAAMFGGISESEYGVPYAHYPQRTQRPPSPSLTAQRLIREQQDDEYLASLEADRVKAEARRLEEEAARVEAIEEAKRKEEEARRKVEEEQELERQLVSKEASLPQEPPAGEENAITLQVRLPDGTRHGRRFFKSDKLQSLFDFIDICRVVKPNTYRLVRPYPRRAFGDGECSSTLNDIGLTSKQEALFLELI.

Residues 2 to 44 (ATPTQEAIDTFMTITGSSNAVAVRKLEEYRGNLNRAVNAYFTH) enclose the UBA-like domain. Disordered regions lie at residues 67–96 (RTTD…PPFV), 150–172 (DDDN…SAEN), and 194–328 (METG…EEHD). The span at 209-229 (AEREVLRSEGWKASSSEREAS) shows a compositional bias: basic and acidic residues. A compositionally biased stretch (acidic residues) spans 254–274 (SEDDDDDDDDDPDYVEEEEEP). Ser-362 is modified (phosphoserine). Residues 380-436 (LASLEADRVKAEARRLEEEAARVEAIEEAKRKEEEARRKVEEEQELERQLVSKEASL) are a coiled coil. A compositionally biased stretch (basic and acidic residues) spans 408–430 (AKRKEEEARRKVEEEQELERQLV). The tract at residues 408 to 446 (AKRKEEEARRKVEEEQELERQLVSKEASLPQEPPAGEEN) is disordered. In terms of domain architecture, UBX spans 443-521 (GEENAITLQV…GLTSKQEALF (79 aa)).

The chain is Plant UBX domain-containing protein 13 from Arabidopsis thaliana (Mouse-ear cress).